The sequence spans 174 residues: DNA replication inhibitor plutonium (174 aa).

ANK repeat units follow at residues 39-68 (YGNT…NIFA) and 72-103 (FGQN…DFNL). A Phosphothreonine modification is found at threonine 167.

Functionally, inhibits DNA replication early in developments. May bind and block the action of a replication or initiation factor. The polypeptide is DNA replication inhibitor plutonium (plu) (Drosophila melanogaster (Fruit fly)).